The following is a 207-amino-acid chain: ATP-dependent Clp protease proteolytic subunit (207 aa).

Catalysis depends on Ser-111, which acts as the Nucleophile. Residue His-136 is part of the active site.

This sequence belongs to the peptidase S14 family. Fourteen ClpP subunits assemble into 2 heptameric rings which stack back to back to give a disk-like structure with a central cavity, resembling the structure of eukaryotic proteasomes.

The protein localises to the cytoplasm. The enzyme catalyses Hydrolysis of proteins to small peptides in the presence of ATP and magnesium. alpha-casein is the usual test substrate. In the absence of ATP, only oligopeptides shorter than five residues are hydrolyzed (such as succinyl-Leu-Tyr-|-NHMec, and Leu-Tyr-Leu-|-Tyr-Trp, in which cleavage of the -Tyr-|-Leu- and -Tyr-|-Trp bonds also occurs).. Functionally, cleaves peptides in various proteins in a process that requires ATP hydrolysis. Has a chymotrypsin-like activity. Plays a major role in the degradation of misfolded proteins. This is ATP-dependent Clp protease proteolytic subunit from Proteus mirabilis (strain HI4320).